The sequence spans 864 residues: Protein PAT1 homolog 1 (864 aa).

Over residues proline 427 to glycine 439 the composition is skewed to polar residues. Disordered stretches follow at residues proline 427–proline 460, tryptophan 518–aspartate 539, and glutamate 551–asparagine 602. Positions glutamate 551–proline 580 are enriched in basic and acidic residues.

Belongs to the PAT1 family.

The protein localises to the cytoplasm. It is found in the P-body. In terms of biological role, RNA-binding protein involved in deadenylation-dependent decapping of mRNAs, leading to the degradation of mRNAs. Acts as a scaffold protein that connects deadenylation and decapping machinery. Required for the recruitment of P-body components such as cgh-1 in somatic blastomeres. May play a role in recruiting the decapping enzyme dcap-1 to cytoplasmic puncta in the cell body of the posterior touch receptor neuron, PLM. The chain is Protein PAT1 homolog 1 (patr-1) from Caenorhabditis briggsae.